Reading from the N-terminus, the 429-residue chain is Cholesterol 7-desaturase nvd (429 aa).

The chain crosses the membrane as a helical span at residues 23 to 43; the sequence is FVICLWTLAVTFIRIYWIFFV. The Rieske domain maps to 98–201; that stretch reads YGILKSSQLK…SQEVDGFIFI (104 aa). The [2Fe-2S] cluster site is built by Cys138, His140, Cys158, and His161.

It belongs to the cholesterol 7-desaturase family. The cofactor is [2Fe-2S] cluster. Expressed predominantly in the prothoracic gland and weakly in brain and malpighian tubules.

It localises to the membrane. The catalysed reaction is cholesterol + NADPH + O2 + H(+) = 7-dehydrocholesterol + NADP(+) + 2 H2O. It catalyses the reaction cholesterol + NADH + O2 + H(+) = 7-dehydrocholesterol + NAD(+) + 2 H2O. The protein operates within steroid hormone biosynthesis; dafachronic acid biosynthesis. Its function is as follows. Catalyzes the production of 7-dehydrocholesterol (7-DHC or cholesta-5,7-dien-3beta-ol) by inserting a double bond (desaturating) at the C7-C8 single bond of cholesterol. Essential regulator of steroid biosynthesis, as this reaction is the first step in the synthesis of the steroid hormone Delta(7)-dafachronic acid. Required for insect molting, metamorphosis and body growth throughout development via the regulation of ecdysteroid biosynthesis in the prothoracic gland. In Drosophila melanogaster (Fruit fly), this protein is Cholesterol 7-desaturase nvd.